The primary structure comprises 433 residues: Ribulose bisphosphate carboxylase/oxygenase activase, chloroplastic (433 aa).

The span at 1 to 20 (MAAAFSSTVGAPASTPTRSS) shows a compositional bias: polar residues. The N-terminal 53 residues, 1–53 (MAAAFSSTVGAPASTPTRSSFLGKKLNKPQVSAAVTYHGKSSSSNSRFKAMAA), are a transit peptide targeting the chloroplast. Residues 1-60 (MAAAFSSTVGAPASTPTRSSFLGKKLNKPQVSAAVTYHGKSSSSNSRFKAMAAKEVDETK) form a disordered region. 161-168 (GGKGQGKS) provides a ligand contact to ATP.

It belongs to the RuBisCO activase family.

It localises to the plastid. The protein localises to the chloroplast stroma. Its function is as follows. Activation of RuBisCO (ribulose-1,5-bisphosphate carboxylase/oxygenase; EC 4.1.1.39) involves the ATP-dependent carboxylation of the epsilon-amino group of lysine leading to a carbamate structure. The sequence is that of Ribulose bisphosphate carboxylase/oxygenase activase, chloroplastic (RCA1) from Zea mays (Maize).